The sequence spans 418 residues: FXa-directed anticoagulant (418 aa).

A signal peptide spans 1–19 (MNLKIAIIVICQLVYFTQG). 3 N-linked (GlcNAc...) asparagine glycosylation sites follow: asparagine 117, asparagine 167, and asparagine 286.

The protein belongs to the serpin family. Interacts with host coagulation factor X/F10 (activated). As to expression, female salivary gland (at protein level).

It localises to the secreted. In terms of biological role, anticoagulant and antithrombotic serpin-type protein inhibiting host coagulation factor Xa (F10). Does not inhibit host uPA/urokinase-type plasminogen activator (PLAU), kallikrein, granzyme B (GZMB), matriptase, elastase, alpha-chymotrypsin, chymase, coagulation factor XIIa (F12), coagulation factor XIa (F11), plasmin (PLG), thrombin (F2), trypsin and cathepsin G (CTSG). Inhibits factor Xa-induced production of pro-inflammatory cytokines, such as MCP-1/CCL2, TNF-alpha/TNF, IL-1beta/IL1B, IL6, IL8/CXCL8 and IL18, in human endothelial cells. Inhibits factor Xa-induced up-regulation of protease-activated receptors (PARs) F2R, F2RL1 and F2RL2 in human endothelial cells. Prevents activation of host F2RL1 via inhibition of F2RL1 cleavage by host factor Xa. Inhibits factor Xa-induced up-regulation of adhesion molecules ICAM1 and VCAM1 in human endothelial cells. Inhibits factor Xa-induced up-regulation of phosphorylated ERK1/2 in human endothelial cells. Inhibits factor Xa-induced activation of transcription factor NF-kappa-B in human endothelial cells. Reduces factor Xa-induced edema in the host. Reduces factor Xa-induced endothelial permeability in the host. The chain is FXa-directed anticoagulant from Aedes albopictus (Asian tiger mosquito).